Reading from the N-terminus, the 401-residue chain is Elongation factor Tu, apicoplast (401 aa).

Positions 10-206 constitute a tr-type G domain; it reads KPHINIGTIG…ALDSYIPLPK (197 aa). The tract at residues 19–26 is G1; that stretch reads GHVDHGKT. 19-26 contacts GTP; it reads GHVDHGKT. A Mg(2+)-binding site is contributed by threonine 26. The G2 stretch occupies residues 60–64; sequence GITIK. Residues 81 to 84 form a G3 region; that stretch reads DCPG. GTP-binding positions include 81–85 and 136–139; these read DCPGH and NKID. The segment at 136-139 is G4; the sequence is NKID. The G5 stretch occupies residues 173–175; that stretch reads SAL.

This sequence belongs to the TRAFAC class translation factor GTPase superfamily. Classic translation factor GTPase family. EF-Tu/EF-1A subfamily. In terms of assembly, monomer.

Its subcellular location is the plastid. It localises to the apicoplast. The enzyme catalyses GTP + H2O = GDP + phosphate + H(+). Functionally, GTP hydrolase that promotes the GTP-dependent binding of aminoacyl-tRNA to the A-site of ribosomes during protein biosynthesis. This Toxoplasma gondii protein is Elongation factor Tu, apicoplast (tufA).